The following is a 21-amino-acid chain: Trypsin (21 aa).

The protein belongs to the peptidase S1 family.

The protein localises to the secreted. Its subcellular location is the extracellular space. It catalyses the reaction Preferential cleavage: Arg-|-Xaa, Lys-|-Xaa.. This chain is Trypsin, found in Apis mellifera scutellata (Africanized honey bee).